The chain runs to 103 residues: Large ribosomal subunit protein bL21 (103 aa).

Belongs to the bacterial ribosomal protein bL21 family. In terms of assembly, part of the 50S ribosomal subunit. Contacts protein L20.

In terms of biological role, this protein binds to 23S rRNA in the presence of protein L20. The protein is Large ribosomal subunit protein bL21 of Rhodococcus jostii (strain RHA1).